The primary structure comprises 525 residues: GMP synthase [glutamine-hydrolyzing] (525 aa).

A Glutamine amidotransferase type-1 domain is found at 9–207 (RILILDFGSQ…VRDICQCEAL (199 aa)). The Nucleophile role is filled by Cys-86. Residues His-181 and Glu-183 contribute to the active site. The 193-residue stretch at 208–400 (WTPAKIIDDA…LGLPYDMLYR (193 aa)) folds into the GMPS ATP-PPase domain. 235–241 (SGGVDSS) lines the ATP pocket.

As to quaternary structure, homodimer.

It carries out the reaction XMP + L-glutamine + ATP + H2O = GMP + L-glutamate + AMP + diphosphate + 2 H(+). It functions in the pathway purine metabolism; GMP biosynthesis; GMP from XMP (L-Gln route): step 1/1. Functionally, catalyzes the synthesis of GMP from XMP. This is GMP synthase [glutamine-hydrolyzing] from Citrobacter koseri (strain ATCC BAA-895 / CDC 4225-83 / SGSC4696).